The chain runs to 308 residues: Aspartate carbamoyltransferase catalytic subunit (308 aa).

Carbamoyl phosphate is bound by residues Arg51 and Thr52. Lys79 is a binding site for L-aspartate. Residues Arg101, His130, and Gln133 each coordinate carbamoyl phosphate. L-aspartate contacts are provided by Arg163 and Arg215. Carbamoyl phosphate-binding residues include Ala258 and Pro259.

It belongs to the aspartate/ornithine carbamoyltransferase superfamily. ATCase family. Heterododecamer (2C3:3R2) of six catalytic PyrB chains organized as two trimers (C3), and six regulatory PyrI chains organized as three dimers (R2).

It carries out the reaction carbamoyl phosphate + L-aspartate = N-carbamoyl-L-aspartate + phosphate + H(+). Its pathway is pyrimidine metabolism; UMP biosynthesis via de novo pathway; (S)-dihydroorotate from bicarbonate: step 2/3. In terms of biological role, catalyzes the condensation of carbamoyl phosphate and aspartate to form carbamoyl aspartate and inorganic phosphate, the committed step in the de novo pyrimidine nucleotide biosynthesis pathway. The chain is Aspartate carbamoyltransferase catalytic subunit from Pediococcus pentosaceus (strain ATCC 25745 / CCUG 21536 / LMG 10740 / 183-1w).